The primary structure comprises 563 residues: MDLEQKTRGLSKSCALLIVIAGMERYAFKGVASNLVTYLTDVVKMSNSRAAKTVNTWAGFTSMLPLFSAPLADTYWDRFFTILASSSVYFVGLVGLTWTAFAGSRSATKTISSYFLYSSLCLVSIGLGVLNPSLQAFGADQLDHDLDKNFDLSSGDQKDAKATRKTQFFQLWYFGVCTGSLMGVTVMAYIQDTFGWVLGFAIPGIVIFLSILVFMSGCGIYVYAPGARLKKKTTTTPFEKILKFIKGRVVKQRSIYTLADEKDLDAMELELEERPLCKCETEDIETPSTTSKGLEDDESSKTVFSGIDNVKLVIRLFPIWMMLLMFAVIFQLPATFFTKQGVTMKRNIGSNFKIPPATLQSTITLSIILLMPLYDKILIPITKRIKKNGTGISVMERMGVGMFLSIIAIVIAAIVERKRLAISQKMKTLPDYDPETVPLSIFWLLPQYILLGISDIFTVVGMQEFFYSEVPVRMRTMGFALYTSVFGVGSFVSAALISIVEAYSSSTGDRQNWFADDMSEARLDKYYWLLALTSTISFVVYIFLCKFFKSSSDQGDEKEEAPK.

The chain crosses the membrane as a helical span at residues 56–76 (TWAGFTSMLPLFSAPLADTYW). The residue at position 81 (Thr-81) is a Phosphothreonine. A run of 10 helical transmembrane segments spans residues 82–102 (ILAS…TAFA), 110–130 (TISS…LGVL), 168–188 (FFQL…TVMA), 194–214 (FGWV…ILVF), 317–337 (FPIW…ATFF), 362–382 (TITL…IPIT), 394–414 (VMER…IAAI), 441–461 (IFWL…TVVG), 479–499 (FALY…LISI), and 528–548 (WLLA…CKFF).

The protein belongs to the major facilitator superfamily. Proton-dependent oligopeptide transporter (POT/PTR) (TC 2.A.17) family. In terms of tissue distribution, expressed in roots and flowers.

It is found in the membrane. This Arabidopsis thaliana (Mouse-ear cress) protein is Protein NRT1/ PTR FAMILY 5.9 (NPF5.9).